The sequence spans 306 residues: Tyrosine recombinase XerC (306 aa).

The 80-residue stretch at 2–81 (AKASAAIEEF…ALRQFYGFLV (80 aa)) folds into the Core-binding (CB) domain. The 182-residue stretch at 102-283 (PLPKTLSHKE…DAARLVALVN (182 aa)) folds into the Tyr recombinase domain. Residues Arg146, Lys170, His235, Arg238, and His261 contribute to the active site. Tyr270 serves as the catalytic O-(3'-phospho-DNA)-tyrosine intermediate.

It belongs to the 'phage' integrase family. XerC subfamily. In terms of assembly, forms a cyclic heterotetrameric complex composed of two molecules of XerC and two molecules of XerD.

Its subcellular location is the cytoplasm. Its function is as follows. Site-specific tyrosine recombinase, which acts by catalyzing the cutting and rejoining of the recombining DNA molecules. The XerC-XerD complex is essential to convert dimers of the bacterial chromosome into monomers to permit their segregation at cell division. It also contributes to the segregational stability of plasmids. The chain is Tyrosine recombinase XerC from Erythrobacter litoralis (strain HTCC2594).